The chain runs to 306 residues: D-alanine--D-alanine ligase (306 aa).

Positions lysine 106–glycine 301 constitute an ATP-grasp domain. Alanine 132 to threonine 187 lines the ATP pocket. Mg(2+) contacts are provided by aspartate 255, glutamate 268, and asparagine 270.

This sequence belongs to the D-alanine--D-alanine ligase family. Requires Mg(2+) as cofactor. It depends on Mn(2+) as a cofactor.

Its subcellular location is the cytoplasm. The enzyme catalyses 2 D-alanine + ATP = D-alanyl-D-alanine + ADP + phosphate + H(+). The protein operates within cell wall biogenesis; peptidoglycan biosynthesis. In terms of biological role, cell wall formation. This chain is D-alanine--D-alanine ligase, found in Nitrosospira multiformis (strain ATCC 25196 / NCIMB 11849 / C 71).